The following is a 433-amino-acid chain: Myricetin 3-O-glucosyl 1,2-rhamnoside 6'-O-caffeoyltransferase AT1 (433 aa).

Residues histidine 157 and aspartate 375 each act as proton acceptor in the active site.

This sequence belongs to the plant acyltransferase family. In terms of tissue distribution, expressed in young cromes.

The catalysed reaction is myricetin 3-O-[beta-D-glucosyl-(1-&gt;2)-alpha-L-rhamnoside] + (E)-caffeoyl-CoA = myricetin 3-O-[(6-O-(E)-caffeoyl-beta-D-glucosyl)-(1-&gt;2)-alpha-L-rhamnoside] + CoA. It functions in the pathway flavonoid metabolism. In terms of biological role, caffeoyltransferase involved in montbretin A (MbA) biosynthesis. Catalyzes the caffeoylation of myricetin 3-O-beta-D-glucosyl 1,2-alpha-L-rhamnoside (MRG) to produce myricetin 3-O-(6'-O-caffeoyl)-beta-D-glucosyl 1,2-alpha-L-rhamnoside (mini-MbA), a precursor of MbA. Mini-MbA and MbA are potent inhibitors of human pancreatic alpha-amylase and are being developed as drug candidates to treat type-2 diabetes. In vitro, is able to catalyze the caffeoylation of quercetin 3-O-sophoroside (QGG), although QGG may not be a physiological substrate in vivo. In vitro, can use coumaryl-CoA, feruloyl-CoA and acetyl-CoA, although these three acyl donors may not be physiological in vivo. This is Myricetin 3-O-glucosyl 1,2-rhamnoside 6'-O-caffeoyltransferase AT1 from Crocosmia x crocosmiiflora (Montbretia).